The sequence spans 494 residues: 3-octaprenyl-4-hydroxybenzoate carboxy-lyase (494 aa).

Asn172 provides a ligand contact to Mn(2+). Residues 175-177 (IYR), 189-191 (RWL), and 194-195 (RG) contribute to the prenylated FMN site. Glu238 lines the Mn(2+) pocket. The Proton donor role is filled by Asp287.

The protein belongs to the UbiD family. In terms of assembly, homohexamer. Requires prenylated FMN as cofactor. It depends on Mn(2+) as a cofactor.

It localises to the cell membrane. It catalyses the reaction a 4-hydroxy-3-(all-trans-polyprenyl)benzoate + H(+) = a 2-(all-trans-polyprenyl)phenol + CO2. It functions in the pathway cofactor biosynthesis; ubiquinone biosynthesis. Functionally, catalyzes the decarboxylation of 3-octaprenyl-4-hydroxy benzoate to 2-octaprenylphenol, an intermediate step in ubiquinone biosynthesis. The protein is 3-octaprenyl-4-hydroxybenzoate carboxy-lyase of Shigella flexneri serotype 5b (strain 8401).